The chain runs to 42 residues: Photosystem I reaction center subunit IX (42 aa).

The helical transmembrane segment at 7–27 (FLSLGPVLLVLWLSVQATLLI) threads the bilayer.

It belongs to the PsaJ family.

It is found in the cellular thylakoid membrane. Functionally, may help in the organization of the PsaE and PsaF subunits. The sequence is that of Photosystem I reaction center subunit IX from Gloeothece citriformis (strain PCC 7424) (Cyanothece sp. (strain PCC 7424)).